Consider the following 1221-residue polypeptide: Coatomer subunit alpha (1221 aa).

WD repeat units follow at residues 7–46, 49–88, 91–130, 133–172, 202–241, 243–282, 285–323, 358–399, and 528–567; these read TKAS…LLEK, EHEG…CLFT, GHKD…CIAE, GHNH…KKMT, GHDR…VDTF, GHYN…TVHM, RDHD…PLFV, PSNN…SNTV, and WDDN…TGVK. The disordered stretch occupies residues 820–885; that stretch reads GVEQSTSTPT…DDGGWERDDL (66 aa). Over residues 844–857 the composition is skewed to low complexity; that stretch reads SQQQSSQQQQQQQQ. The WD 10 repeat unit spans residues 910–953; it reads PQPGPSFSMIWARNSQFAVDHIAAGSFESAMNILNSQIGAVNFD.

Oligomeric complex that consists of at least the alpha, beta, beta', gamma, delta, epsilon and zeta subunits.

It localises to the cytoplasm. The protein resides in the golgi apparatus membrane. Its function is as follows. The coatomer is a cytosolic protein complex that binds to dilysine motifs and reversibly associates with Golgi non-clathrin-coated vesicles, which further mediate biosynthetic protein transport from the ER, via the Golgi up to the trans Golgi network. Coatomer complex is required for budding from Golgi membranes, and is essential for the retrograde Golgi-to-ER transport of dilysine-tagged proteins. The sequence is that of Coatomer subunit alpha (copa) from Dictyostelium discoideum (Social amoeba).